The sequence spans 359 residues: UDP-N-acetylglucosamine--N-acetylmuramyl-(pentapeptide) pyrophosphoryl-undecaprenol N-acetylglucosamine transferase (359 aa).

Residues 15 to 17 (SGG), N127, R164, S192, I246, 265 to 270 (ALTVSE), and Q290 each bind UDP-N-acetyl-alpha-D-glucosamine.

It belongs to the glycosyltransferase 28 family. MurG subfamily.

Its subcellular location is the cell membrane. It carries out the reaction di-trans,octa-cis-undecaprenyl diphospho-N-acetyl-alpha-D-muramoyl-L-alanyl-D-glutamyl-meso-2,6-diaminopimeloyl-D-alanyl-D-alanine + UDP-N-acetyl-alpha-D-glucosamine = di-trans,octa-cis-undecaprenyl diphospho-[N-acetyl-alpha-D-glucosaminyl-(1-&gt;4)]-N-acetyl-alpha-D-muramoyl-L-alanyl-D-glutamyl-meso-2,6-diaminopimeloyl-D-alanyl-D-alanine + UDP + H(+). It participates in cell wall biogenesis; peptidoglycan biosynthesis. Functionally, cell wall formation. Catalyzes the transfer of a GlcNAc subunit on undecaprenyl-pyrophosphoryl-MurNAc-pentapeptide (lipid intermediate I) to form undecaprenyl-pyrophosphoryl-MurNAc-(pentapeptide)GlcNAc (lipid intermediate II). This chain is UDP-N-acetylglucosamine--N-acetylmuramyl-(pentapeptide) pyrophosphoryl-undecaprenol N-acetylglucosamine transferase, found in Wigglesworthia glossinidia brevipalpis.